Consider the following 55-residue polypeptide: Large ribosomal subunit protein bL33 (55 aa).

This sequence belongs to the bacterial ribosomal protein bL33 family.

The protein is Large ribosomal subunit protein bL33 of Dehalococcoides mccartyi (strain ATCC BAA-2266 / KCTC 15142 / 195) (Dehalococcoides ethenogenes (strain 195)).